The chain runs to 825 residues: MHTDTLEHDALARAGAHARIQAACAQACSAIAPAWPLDRAIAVNPHWQRTGQPLRRVAARMALLGGIQVFPPRERQREAWQGGRITPQDLALALQRLPDAAGLAEADCVAALDRPGGLQPLPLLIDVLDNDPARDTRLTWRQAITHQVSQTCAAFFDRAQADWQPERGPGLYAFWRDTLTHDHGIGTLMGLPGLHRGVQALPATREDAEAWAMHHLQLQGGAWADYLEAVLLTVNGWASWCAYLAWQAPEGAPEREHLRDLLAIRLAWGAVLLECKDDAAARQAFAALQAEWRRAPERLQQAEQALVVDEVWQLALELGYQRELAGRLVRAPGLPSAVPEAQAVFCIDVRSEPLRRALEATAPTLQTLGFAGFFGVPAAYTPLGTAARRPQLPGLLPPAMEVTDQLPDPGAAVTARHRRLAWAAQWESTTRWPGAAFSFVEALGAGYLGKLGGWLWPREQARDSGDHAGLPARYRPVCRPMLSGLSLEERAALAARVLKALGLARGAAPLVMLVGHGSQSANNAQAAALDCGACCGQTGEVNARALALLLNDAEVRTALPALGIALPEATCFVAALHNTTTDEIEGFDLDLLPPEARARWERWQPVFSAAGDRVRRERAPSLGLDARAAAGDLLSALRRRANDGAQTRPEWGLAGNAAFVIAPRSRTRDAELGGRAFLHDYDPAQDTDGSLLELLMTAPMLVTHWINWQYHASTCDPERLGSGNKLLHNVVGGHIGVFEGNGGDLRIGLSRQSLHDGQRWVHEPLRLTVVIDAPAAAIEAVIGKHSVLQQLLDHGWLHLWRFGDAGLERREGGRWFAQDAGASGA.

Cys-346, Asp-348, His-516, and Cys-531 together coordinate Zn(2+).

The protein belongs to the inorganic carbon transporter (TC 9.A.2) DabA family. Forms a complex with DabB. Requires Zn(2+) as cofactor.

It is found in the cell inner membrane. Part of an energy-coupled inorganic carbon pump. The sequence is that of Probable inorganic carbon transporter subunit DabA from Paracidovorax citrulli (strain AAC00-1) (Acidovorax citrulli).